Consider the following 116-residue polypeptide: Ribonuclease P protein component (116 aa).

The protein belongs to the RnpA family. In terms of assembly, consists of a catalytic RNA component (M1 or rnpB) and a protein subunit.

It catalyses the reaction Endonucleolytic cleavage of RNA, removing 5'-extranucleotides from tRNA precursor.. Functionally, RNaseP catalyzes the removal of the 5'-leader sequence from pre-tRNA to produce the mature 5'-terminus. It can also cleave other RNA substrates such as 4.5S RNA. The protein component plays an auxiliary but essential role in vivo by binding to the 5'-leader sequence and broadening the substrate specificity of the ribozyme. This chain is Ribonuclease P protein component, found in Citrifermentans bemidjiense (strain ATCC BAA-1014 / DSM 16622 / JCM 12645 / Bem) (Geobacter bemidjiensis).